The following is a 299-amino-acid chain: J domain-containing protein CG6693 (299 aa).

One can recognise a J domain in the interval 15-82; that stretch reads DVYKLMELAR…QKRALYDEQG (68 aa). Ser-239 bears the Phosphoserine mark. The tract at residues 266 to 299 is disordered; the sequence is FEKKKKKSKKPAAKQETKPKLNGVKAGRVEKGKN. Residues 268 to 277 are compositionally biased toward basic residues; sequence KKKKKSKKPA.

The polypeptide is J domain-containing protein CG6693 (Drosophila melanogaster (Fruit fly)).